The chain runs to 289 residues: Polyketide biosynthesis malonyl CoA-acyl carrier protein transacylase BaeC (289 aa).

Catalysis depends on residues Ser87 and His193.

It belongs to the FabD family.

The protein resides in the cytoplasm. The catalysed reaction is holo-[ACP] + malonyl-CoA = malonyl-[ACP] + CoA. The protein operates within antibiotic biosynthesis; bacillaene biosynthesis. In terms of biological role, involved in some intermediate steps for the synthesis of the antibiotic polyketide bacillaene which is involved in secondary metabolism. It catalyzes the transfer of the malonyl-CoA group to the acyl-carrier-protein AcpK (Mal-AcpK). The sequence is that of Polyketide biosynthesis malonyl CoA-acyl carrier protein transacylase BaeC (baeC) from Bacillus velezensis (strain DSM 23117 / BGSC 10A6 / LMG 26770 / FZB42) (Bacillus amyloliquefaciens subsp. plantarum).